We begin with the raw amino-acid sequence, 228 residues long: Phosphoribosylformylglycinamidine synthase subunit PurQ (228 aa).

One can recognise a Glutamine amidotransferase type-1 domain in the interval 3 to 226; sequence FAVIVFPGSN…VNYWRETHVV (224 aa). The active-site Nucleophile is the cysteine 86. Active-site residues include histidine 195 and glutamate 197.

In terms of assembly, part of the FGAM synthase complex composed of 1 PurL, 1 PurQ and 2 PurS subunits.

It localises to the cytoplasm. It carries out the reaction N(2)-formyl-N(1)-(5-phospho-beta-D-ribosyl)glycinamide + L-glutamine + ATP + H2O = 2-formamido-N(1)-(5-O-phospho-beta-D-ribosyl)acetamidine + L-glutamate + ADP + phosphate + H(+). It catalyses the reaction L-glutamine + H2O = L-glutamate + NH4(+). Its pathway is purine metabolism; IMP biosynthesis via de novo pathway; 5-amino-1-(5-phospho-D-ribosyl)imidazole from N(2)-formyl-N(1)-(5-phospho-D-ribosyl)glycinamide: step 1/2. Functionally, part of the phosphoribosylformylglycinamidine synthase complex involved in the purines biosynthetic pathway. Catalyzes the ATP-dependent conversion of formylglycinamide ribonucleotide (FGAR) and glutamine to yield formylglycinamidine ribonucleotide (FGAM) and glutamate. The FGAM synthase complex is composed of three subunits. PurQ produces an ammonia molecule by converting glutamine to glutamate. PurL transfers the ammonia molecule to FGAR to form FGAM in an ATP-dependent manner. PurS interacts with PurQ and PurL and is thought to assist in the transfer of the ammonia molecule from PurQ to PurL. The protein is Phosphoribosylformylglycinamidine synthase subunit PurQ of Geobacillus thermodenitrificans (strain NG80-2).